Here is a 179-residue protein sequence, read N- to C-terminus: Peptide deformylase (179 aa).

2 residues coordinate Fe cation: C103 and H145. The active site involves E146. H149 contacts Fe cation.

Belongs to the polypeptide deformylase family. The cofactor is Fe(2+).

The enzyme catalyses N-terminal N-formyl-L-methionyl-[peptide] + H2O = N-terminal L-methionyl-[peptide] + formate. Removes the formyl group from the N-terminal Met of newly synthesized proteins. Requires at least a dipeptide for an efficient rate of reaction. N-terminal L-methionine is a prerequisite for activity but the enzyme has broad specificity at other positions. The protein is Peptide deformylase of Leptospira biflexa serovar Patoc (strain Patoc 1 / Ames).